We begin with the raw amino-acid sequence, 551 residues long: Putative BTB/POZ domain-containing protein L76 (551 aa).

The BTB domain occupies 19–90 (TDIILEIEDD…FYGQENDVID (72 aa)).

The protein belongs to the mimivirus BTB/WD family.

The polypeptide is Putative BTB/POZ domain-containing protein L76 (Acanthamoeba polyphaga (Amoeba)).